We begin with the raw amino-acid sequence, 259 residues long: E3 ubiquitin-protein ligase RNF170 (259 aa).

Over 1-25 (MAKYQGEVQSLKLDDDSVIEGVSDQ) the chain is Lumenal. A helical transmembrane segment spans residues 26–46 (VLVAVVVSLALIATLVYALFS). At 47–202 (RNAHQNIHPE…GGLFWMFRIR (156 aa)) the chain is on the cytoplasmic side. An RING-type zinc finger spans residues 88–131 (CPICLHQASLPVETNCGHLFCGTCIVAYWRYGSWLGAISCPICR). The chain crosses the membrane as a helical span at residues 203–223 (IILCLMGAFFYLISPLDFVPE). Position 224 (Ala224) is a topological domain, lumenal. A helical transmembrane segment spans residues 225–245 (LFGILGFLDDFFVIFLLLIYI). The Cytoplasmic portion of the chain corresponds to 246–259 (SIMYREVITQRLNR).

As to quaternary structure, constitutively associated with the ERLIN1/ERLIN 2 complex. Interacts with activated ITPR1.

The protein localises to the endoplasmic reticulum membrane. It catalyses the reaction S-ubiquitinyl-[E2 ubiquitin-conjugating enzyme]-L-cysteine + [acceptor protein]-L-lysine = [E2 ubiquitin-conjugating enzyme]-L-cysteine + N(6)-ubiquitinyl-[acceptor protein]-L-lysine.. It participates in protein modification; protein ubiquitination. Functionally, E3 ubiquitin-protein ligase. Plays an essential role in stimulus-induced inositol 1,4,5-trisphosphate receptor type 1 (ITPR1) ubiquitination and degradation via the endoplasmic reticulum-associated degradation (ERAD) pathway. Also involved in ITPR1 turnover in resting cells. Selectively inhibits the TLR3-triggered innate immune response by promoting the 'Lys-48'-linked polyubiquitination and degradation of TLR3. This is E3 ubiquitin-protein ligase RNF170 (RNF170) from Bos taurus (Bovine).